The following is a 431-amino-acid chain: Glutamate--tRNA ligase 1 (431 aa).

Residues 6–16 (PSPTGDMHIGN) carry the 'HIGH' region motif. Positions 235–239 (KMSKR) match the 'KMSKS' region motif. Lys-238 is an ATP binding site.

It belongs to the class-I aminoacyl-tRNA synthetase family. Glutamate--tRNA ligase type 1 subfamily. As to quaternary structure, monomer.

The protein resides in the cytoplasm. The catalysed reaction is tRNA(Glu) + L-glutamate + ATP = L-glutamyl-tRNA(Glu) + AMP + diphosphate. Its function is as follows. Catalyzes the attachment of glutamate to tRNA(Glu) in a two-step reaction: glutamate is first activated by ATP to form Glu-AMP and then transferred to the acceptor end of tRNA(Glu). This is Glutamate--tRNA ligase 1 from Campylobacter jejuni subsp. jejuni serotype O:6 (strain 81116 / NCTC 11828).